We begin with the raw amino-acid sequence, 156 residues long: tRNA (cytidine(34)-2'-O)-methyltransferase (156 aa).

Positions 100, 122, and 130 each coordinate S-adenosyl-L-methionine.

The protein belongs to the class IV-like SAM-binding methyltransferase superfamily. RNA methyltransferase TrmH family. TrmL subfamily. In terms of assembly, homodimer.

It is found in the cytoplasm. The enzyme catalyses cytidine(34) in tRNA + S-adenosyl-L-methionine = 2'-O-methylcytidine(34) in tRNA + S-adenosyl-L-homocysteine + H(+). It catalyses the reaction 5-carboxymethylaminomethyluridine(34) in tRNA(Leu) + S-adenosyl-L-methionine = 5-carboxymethylaminomethyl-2'-O-methyluridine(34) in tRNA(Leu) + S-adenosyl-L-homocysteine + H(+). Functionally, methylates the ribose at the nucleotide 34 wobble position in the two leucyl isoacceptors tRNA(Leu)(CmAA) and tRNA(Leu)(cmnm5UmAA). Catalyzes the methyl transfer from S-adenosyl-L-methionine to the 2'-OH of the wobble nucleotide. The sequence is that of tRNA (cytidine(34)-2'-O)-methyltransferase from Aeromonas hydrophila subsp. hydrophila (strain ATCC 7966 / DSM 30187 / BCRC 13018 / CCUG 14551 / JCM 1027 / KCTC 2358 / NCIMB 9240 / NCTC 8049).